The following is a 431-amino-acid chain: Histidinol dehydrogenase (431 aa).

NAD(+) contacts are provided by Y127, Q189, and N212. Positions 237, 259, and 262 each coordinate substrate. Positions 259 and 262 each coordinate Zn(2+). Active-site proton acceptor residues include E326 and H327. Substrate contacts are provided by H327, D360, E414, and H419. D360 contacts Zn(2+). H419 contacts Zn(2+).

The protein belongs to the histidinol dehydrogenase family. Zn(2+) serves as cofactor.

It carries out the reaction L-histidinol + 2 NAD(+) + H2O = L-histidine + 2 NADH + 3 H(+). Its pathway is amino-acid biosynthesis; L-histidine biosynthesis; L-histidine from 5-phospho-alpha-D-ribose 1-diphosphate: step 9/9. Its function is as follows. Catalyzes the sequential NAD-dependent oxidations of L-histidinol to L-histidinaldehyde and then to L-histidine. This Xanthomonas campestris pv. campestris (strain 8004) protein is Histidinol dehydrogenase.